Consider the following 589-residue polypeptide: UvrABC system protein C (589 aa).

Positions 14-91 constitute a GIY-YIG domain; sequence HKPGCYLWKD…IAKYKPKYNM (78 aa).

This sequence belongs to the UvrC family. Interacts with UvrB in an incision complex.

The protein localises to the cytoplasm. The UvrABC repair system catalyzes the recognition and processing of DNA lesions. UvrC both incises the 5' and 3' sides of the lesion. The N-terminal half is responsible for the 3' incision and the C-terminal half is responsible for the 5' incision. This chain is UvrABC system protein C, found in Malacoplasma penetrans (strain HF-2) (Mycoplasma penetrans).